The sequence spans 124 residues: UPF0102 protein Meso_4010 (124 aa).

This sequence belongs to the UPF0102 family.

The polypeptide is UPF0102 protein Meso_4010 (Chelativorans sp. (strain BNC1)).